A 309-amino-acid polypeptide reads, in one-letter code: Uracil phosphoribosyltransferase homolog (309 aa).

A disordered region spans residues 1 to 41 (MATELQCPDSMPCHNQQVNSASTPSPEQLRPGDPILDHAGG). The segment covering 13 to 26 (CHNQQVNSASTPSP) has biased composition (polar residues). Serine 25 bears the Phosphoserine mark. GTP contacts are provided by residues arginine 133, arginine 142, and 176–179 (EKGN). Arginine 186 contributes to the 5-phospho-alpha-D-ribose 1-diphosphate binding site. Arginine 203 and arginine 232 together coordinate GTP. Position 238 to 246 (238 to 246 (YPILSTGNT)) interacts with 5-phospho-alpha-D-ribose 1-diphosphate. Uracil is bound at residue 299-301 (THF).

The protein belongs to the UPRTase family.

It is found in the cytoplasm. The protein resides in the nucleus. The sequence is that of Uracil phosphoribosyltransferase homolog (UPRT) from Macaca fascicularis (Crab-eating macaque).